A 208-amino-acid polypeptide reads, in one-letter code: MTRVKVCGITNRSDLDTAVDAGVDAVGLIVDVDVQTPREISPQQAAELAAATPPFVTAVLVTMADVPDAATELVEAVRPDAVQVHGESTPDALASLGAAVEADVIKATDPGTAATYDGHADAVLVDSLDESGAGGTGTVHDWDRTGELVESLQSPVVLAGGLTPENVADAVEAAAPFAVDVASGVEAESGQKDADAVSAFVDAAGGCQ.

Belongs to the TrpF family.

The catalysed reaction is N-(5-phospho-beta-D-ribosyl)anthranilate = 1-(2-carboxyphenylamino)-1-deoxy-D-ribulose 5-phosphate. Its pathway is amino-acid biosynthesis; L-tryptophan biosynthesis; L-tryptophan from chorismate: step 3/5. The protein is N-(5'-phosphoribosyl)anthranilate isomerase of Natronomonas pharaonis (strain ATCC 35678 / DSM 2160 / CIP 103997 / JCM 8858 / NBRC 14720 / NCIMB 2260 / Gabara) (Halobacterium pharaonis).